Consider the following 678-residue polypeptide: NADPH--cytochrome P450 reductase (678 aa).

Gly-2 carries the post-translational modification N-acetylglycine. The Lumenal segment spans residues 2–22; sequence GDSHEDTSATVPEAVAEEVSL. The chain crosses the membrane as a helical span at residues 23-43; that stretch reads FSTTDIVLFSLIVGVLTYWFI. Over 44 to 678 the chain is Cytoplasmic; that stretch reads FKKKKEEIPE…KGRYSLDVWS (635 aa). The 145-residue stretch at 80-224 folds into the Flavodoxin-like domain; that stretch reads IIVFYGSQTG…DFITWREQFW (145 aa). FMN-binding positions include 86 to 91, 138 to 141, 173 to 182, and Asp-208; these read SQTGTA, ATYG, and LGNKTYEHFN. Residues 279-521 enclose the FAD-binding FR-type domain; sequence KNPFLAAVTT…FVRKSQFRLP (243 aa). Position 298 (Arg-298) interacts with NADP(+). Residues Arg-424, 454–457, 472–474, Tyr-478, and 488–491 contribute to the FAD site; these read RYYS, CAV, and GVAT. NADP(+) is bound by residues Thr-535, 596–597, 602–606, and Asp-639; these read SR and KVYVQ. Trp-677 contacts FAD.

This sequence belongs to the NADPH--cytochrome P450 reductase family. In the N-terminal section; belongs to the flavodoxin family. The protein in the C-terminal section; belongs to the flavoprotein pyridine nucleotide cytochrome reductase family. It depends on FAD as a cofactor. FMN serves as cofactor.

It localises to the endoplasmic reticulum membrane. The enzyme catalyses 2 oxidized [cytochrome P450] + NADPH = 2 reduced [cytochrome P450] + NADP(+) + H(+). In terms of biological role, this enzyme is required for electron transfer from NADP to cytochrome P450 in microsomes. It can also provide electron transfer to heme oxygenase and cytochrome B5. The protein is NADPH--cytochrome P450 reductase of Mus musculus (Mouse).